The primary structure comprises 320 residues: 1-aminocyclopropane-1-carboxylate oxidase (320 aa).

One can recognise a Fe2OG dioxygenase domain in the interval proline 154–proline 254. Fe cation-binding residues include histidine 178, aspartate 180, and histidine 235.

The protein belongs to the iron/ascorbate-dependent oxidoreductase family. The cofactor is Fe cation.

It catalyses the reaction 1-aminocyclopropane-1-carboxylate + L-ascorbate + O2 = ethene + L-dehydroascorbate + hydrogen cyanide + CO2 + 2 H2O. The protein operates within alkene biosynthesis; ethylene biosynthesis via S-adenosyl-L-methionine; ethylene from S-adenosyl-L-methionine: step 2/2. The polypeptide is 1-aminocyclopropane-1-carboxylate oxidase (ACO) (Persea americana (Avocado)).